A 425-amino-acid chain; its full sequence is Tumor necrosis factor receptor superfamily member 16 (425 aa).

The first 29 residues, Met1–Ala29, serve as a signal peptide directing secretion. Residues Lys30–Ile253 are Extracellular-facing. TNFR-Cys repeat units lie at residues Thr32–Cys65, Pro67–Cys108, Arg109–Cys147, and Glu149–Cys189. Intrachain disulfides connect Cys33/Cys44, Cys45/Cys58, Cys48/Cys65, Cys68/Cys84, Cys87/Cys100, Cys90/Cys108, Cys110/Cys123, Cys126/Cys139, Cys129/Cys147, Cys150/Cys165, Cys168/Cys181, and Cys171/Cys189. 2 N-linked (GlcNAc...) asparagine glycosylation sites follow: Asn61 and Asn71. A disordered region spans residues Pro193–Val225. Positions Ser206–Glu215 are enriched in polar residues. The chain crosses the membrane as a helical span at residues Pro254 to Lys274. The Cytoplasmic portion of the chain corresponds to Arg275–Val425. Composition is skewed to polar residues over residues Asn282–Asn292 and Ser306–Gly327. The segment at Asn282–Gly332 is disordered. Ser312 carries the phosphoserine modification. The tract at residues Gly327 to Leu342 is mediates interaction with KIDINS220. Positions Gly354 to Ser419 constitute a Death domain.

Homodimer; disulfide-linked. Heterodimer with SORCS2. The extracellular domains of the heterodimer bind NGF. The cytoplasmic region of the heterodimer binds TRIO. NGF binding mediates dissociation of TRIO from the receptor complex. Interacts with RTN4R. Interacts with TRAF2, TRAF4 and TRAF6. Interacts with PTPN13 and RANBP9. Interacts through TRAF6 with SQSTM1 which bridges NGFR to NTRK1. Interacts with BEX1. Interacts with BEX3. Interacts with KIDINS220 and NTRK1. Can form a ternary complex with NTRK1 and KIDINS220 and this complex is affected by the expression levels of KIDINS220. An increase in KIDINS220 expression leads to a decreased association of NGFR and NTRK1. Interacts (via death domain) with RAB31. Interacts with NTRK2; may regulate the ligand specificity of the NTRK2 receptor. Interacts with LINGO1. Interacts with NRADD. Interacts with MAGED1; the interaction antagonizes the association NGFR:NTRK1. Interacts (via death domain) with ARHGDIA and RIPK2. Interacts with BFAR. Subject to intramembrane proteolytic cleavage by the gamma-secretase complex, giving rise to an intracellular fragment that is rapidly degraded via the proteasome. Post-translationally, N- and O-glycosylated. In terms of processing, phosphorylated on serine residues.

Its subcellular location is the cell membrane. The protein resides in the cytoplasm. It is found in the perikaryon. It localises to the cell projection. The protein localises to the growth cone. Its subcellular location is the dendritic spine. Functionally, low affinity receptor which can bind to NGF, BDNF, NTF3, and NTF4. Forms a heterodimeric receptor with SORCS2 that binds the precursor forms of NGF, BDNF and NTF3 with high affinity, and has much lower affinity for mature NGF and BDNF. In response to proNGF binding, the heterodimeric receptor with SORCS2 activates a signaling cascade that leads to decreased Rac activity, reorganization of the actin cytoskeleton and neuronal growth cone collapse. Plays an important role in differentiation and survival of specific neuronal populations during development. Can mediate cell survival as well as cell death of neural cells. Plays a role in the inactivation of RHOA. Plays a role in the regulation of the translocation of GLUT4 to the cell surface in adipocytes and skeletal muscle cells in response to insulin, probably by regulating RAB31 activity, and thereby contributes to the regulation of insulin-dependent glucose uptake. Necessary for the circadian oscillation of the clock genes BMAL1, PER1, PER2 and NR1D1 in the suprachiasmatic nucleus (SCN) of the brain and in liver and of the genes involved in glucose and lipid metabolism in the liver. This Rattus norvegicus (Rat) protein is Tumor necrosis factor receptor superfamily member 16 (Ngfr).